We begin with the raw amino-acid sequence, 181 residues long: Large ribosomal subunit protein uL5 (181 aa).

Belongs to the universal ribosomal protein uL5 family. As to quaternary structure, part of the 50S ribosomal subunit; part of the 5S rRNA/L5/L18/L25 subcomplex. Contacts the 5S rRNA and the P site tRNA. Forms a bridge to the 30S subunit in the 70S ribosome.

Functionally, this is one of the proteins that bind and probably mediate the attachment of the 5S RNA into the large ribosomal subunit, where it forms part of the central protuberance. In the 70S ribosome it contacts protein S13 of the 30S subunit (bridge B1b), connecting the 2 subunits; this bridge is implicated in subunit movement. Contacts the P site tRNA; the 5S rRNA and some of its associated proteins might help stabilize positioning of ribosome-bound tRNAs. This Picosynechococcus sp. (strain ATCC 27264 / PCC 7002 / PR-6) (Agmenellum quadruplicatum) protein is Large ribosomal subunit protein uL5.